The sequence spans 282 residues: Tyrosine recombinase XerA (282 aa).

The Core-binding (CB) domain occupies 2–79; the sequence is SEPNEVIEEF…ALRAYFRFEG (78 aa). Residues 95 to 271 form the Tyr recombinase domain; it reads SLPKALTREE…TVEHLRKAQE (177 aa). Catalysis depends on residues R132, K157, H223, R226, and H249. Catalysis depends on Y258, which acts as the O-(3'-phospho-DNA)-tyrosine intermediate.

This sequence belongs to the 'phage' integrase family. XerA subfamily.

Its subcellular location is the cytoplasm. In terms of biological role, site-specific tyrosine recombinase, which acts by catalyzing the cutting and rejoining of the recombining DNA molecules. The protein is Tyrosine recombinase XerA of Thermococcus kodakarensis (strain ATCC BAA-918 / JCM 12380 / KOD1) (Pyrococcus kodakaraensis (strain KOD1)).